Reading from the N-terminus, the 637-residue chain is Nucleoside triphosphatase I (637 aa).

Positions 43–205 (FLGLNSMNSI…QMLVNLLRPG (163 aa)) constitute a Helicase ATP-binding domain. Position 56–63 (56–63 (QETGVGKT)) interacts with ATP. Residues 142–145 (DECH) carry the DEXH box motif. The region spanning 358 to 537 (ELYNYLYEHS…QLYKVFKHSS (180 aa)) is the Helicase C-terminal domain. A binding to the cap-specific mRNA (nucleoside-2'-O-)-methyltransferase region spans residues 459–526 (DIFILDMTWN…DIIQSKSKEF (68 aa)).

This sequence belongs to the helicase family. NPH I subfamily. As to quaternary structure, monomer. Interacts (via C-terminus) with RAP94 (via N-terminus). Interacts with the cap-specific mRNA (nucleoside-2'-O-)-methyltransferase.

The protein resides in the virion. The enzyme catalyses a ribonucleoside 5'-triphosphate + H2O = a ribonucleoside 5'-diphosphate + phosphate + H(+). Its function is as follows. DNA-dependent ATPase required for providing the needed energy to achieve the termination of early transcripts. Acts in concert with the RAP94 subunit of the virion RNA polymerase and the capping enzyme/VTF to catalyze release of UUUUUNU-containing nascent RNA from the elongation complex. NPH-I must bind ssDNA in order to exhibit ATPase activity. In Vertebrata (FPV), this protein is Nucleoside triphosphatase I (NPH1).